We begin with the raw amino-acid sequence, 154 residues long: Flagellar assembly factor FliW (154 aa).

It belongs to the FliW family. As to quaternary structure, interacts with translational regulator CsrA and flagellin(s).

It localises to the cytoplasm. Its function is as follows. Acts as an anti-CsrA protein, binds CsrA and prevents it from repressing translation of its target genes, one of which is flagellin. Binds to flagellin and participates in the assembly of the flagellum. The protein is Flagellar assembly factor FliW of Carboxydothermus hydrogenoformans (strain ATCC BAA-161 / DSM 6008 / Z-2901).